The primary structure comprises 563 residues: Cystathionine gamma-synthase 1, chloroplastic (563 aa).

Residues 1–68 (MAVSSFQCPT…SRILRFPPNF (68 aa)) constitute a chloroplast transit peptide. 7 residues coordinate pyridoxal 5'-phosphate: tyrosine 226, arginine 228, glycine 256, methionine 257, tyrosine 281, serine 376, and threonine 378. Residue lysine 379 is modified to N6-(pyridoxal phosphate)lysine.

Belongs to the trans-sulfuration enzymes family. It depends on pyridoxal 5'-phosphate as a cofactor.

Its subcellular location is the plastid. The protein localises to the chloroplast. The catalysed reaction is O-phospho-L-homoserine + L-cysteine = L,L-cystathionine + phosphate. It catalyses the reaction O-succinyl-L-homoserine + L-cysteine = L,L-cystathionine + succinate + H(+). Its pathway is amino-acid biosynthesis; L-methionine biosynthesis via de novo pathway; L-cystathionine from O-succinyl-L-homoserine: step 1/1. Its activity is regulated as follows. Inhibited by propargylglycine. Functionally, catalyzes the first committed step of methionine (Met) biosynthesis. Catalyzes the formation of L-cystathionine from homoserine esters and L-cysteine, via a gamma-replacement reaction. Substrate preference for cystathionine synthesis is O-phospho-L-homoserine (OPH) &gt; O(4)-succinyl-L-homoserine (OSH) &gt;&gt; O-acetyl-L-homoserine (OAH). Is able, at extremely low rate, to catalyze a gamma-elimination of OPH in the absence of cysteine to produce inorganic phosphate (Pi), 2-oxobutanoate and ammonia. The chain is Cystathionine gamma-synthase 1, chloroplastic from Arabidopsis thaliana (Mouse-ear cress).